The sequence spans 305 residues: tRNA pseudouridine synthase B (305 aa).

Residue aspartate 48 is the Nucleophile of the active site.

The protein belongs to the pseudouridine synthase TruB family. Type 1 subfamily.

The catalysed reaction is uridine(55) in tRNA = pseudouridine(55) in tRNA. Responsible for synthesis of pseudouridine from uracil-55 in the psi GC loop of transfer RNAs. The sequence is that of tRNA pseudouridine synthase B from Pseudomonas fluorescens (strain Pf0-1).